A 448-amino-acid polypeptide reads, in one-letter code: Glucan 1,3-beta-glucosidase I/II (448 aa).

Positions 1–19 (MLSLKTLLCTLLTVSSVLA) are cleaved as a signal peptide. A propeptide spanning residues 20 to 40 (TPVPARDPSSIQFVHEENKKR) is cleaved from the precursor. N-linked (GlcNAc...) asparagine glycosylation occurs at N165. The active-site Proton donor is the E232. N-linked (GlcNAc...) asparagine glycosylation is present at N325. E334 functions as the Nucleophile in the catalytic mechanism.

Belongs to the glycosyl hydrolase 5 (cellulase A) family.

Its subcellular location is the secreted. It is found in the cell wall. The catalysed reaction is Successive hydrolysis of beta-D-glucose units from the non-reducing ends of (1-&gt;3)-beta-D-glucans, releasing alpha-glucose.. Its function is as follows. Glucanases possibly play a role in cell expansion during growth, in cell-cell fusion during mating, and in spore release during sporulation. This enzyme hydrolyzes both 1,3-beta- and 1,6-beta-linkages and even has beta-glucosidase activity. It could also function biosynthetically as a transglycosylase. This Saccharomyces cerevisiae (strain ATCC 204508 / S288c) (Baker's yeast) protein is Glucan 1,3-beta-glucosidase I/II (EXG1).